Reading from the N-terminus, the 229-residue chain is Potassium/proton antiporter CemA (229 aa).

Transmembrane regions (helical) follow at residues 7 to 27 (LASL…SISF) and 106 to 126 (IISH…YFIL).

It belongs to the CemA family.

It is found in the plastid. It localises to the chloroplast inner membrane. It carries out the reaction K(+)(in) + H(+)(out) = K(+)(out) + H(+)(in). Its function is as follows. Contributes to K(+)/H(+) antiport activity by supporting proton efflux to control proton extrusion and homeostasis in chloroplasts in a light-dependent manner to modulate photosynthesis. Prevents excessive induction of non-photochemical quenching (NPQ) under continuous-light conditions. Indirectly promotes efficient inorganic carbon uptake into chloroplasts. This Cycas taitungensis (Prince sago) protein is Potassium/proton antiporter CemA.